We begin with the raw amino-acid sequence, 456 residues long: tRNA modification GTPase MnmE (456 aa).

Residues arginine 26, glutamate 86, and arginine 125 each contribute to the (6S)-5-formyl-5,6,7,8-tetrahydrofolate site. Residues 222-376 (GLSTAIIGRP…IEDRINQLFF (155 aa)) enclose the TrmE-type G domain. Asparagine 232 provides a ligand contact to K(+). Residues 232 to 237 (NVGKSS), 251 to 257 (TDIEGTT), and 276 to 279 (DTAG) contribute to the GTP site. Serine 236 lines the Mg(2+) pocket. Threonine 251, isoleucine 253, and threonine 256 together coordinate K(+). A Mg(2+)-binding site is contributed by threonine 257. Lysine 456 is a (6S)-5-formyl-5,6,7,8-tetrahydrofolate binding site.

This sequence belongs to the TRAFAC class TrmE-Era-EngA-EngB-Septin-like GTPase superfamily. TrmE GTPase family. In terms of assembly, homodimer. Heterotetramer of two MnmE and two MnmG subunits. K(+) is required as a cofactor.

The protein resides in the cytoplasm. In terms of biological role, exhibits a very high intrinsic GTPase hydrolysis rate. Involved in the addition of a carboxymethylaminomethyl (cmnm) group at the wobble position (U34) of certain tRNAs, forming tRNA-cmnm(5)s(2)U34. The polypeptide is tRNA modification GTPase MnmE (Streptococcus thermophilus (strain CNRZ 1066)).